We begin with the raw amino-acid sequence, 197 residues long: Small ribosomal subunit protein uS7 (197 aa).

This sequence belongs to the universal ribosomal protein uS7 family. Part of the 30S ribosomal subunit.

Functionally, one of the primary rRNA binding proteins, it binds directly to 16S rRNA where it nucleates assembly of the head domain of the 30S subunit. Is located at the subunit interface close to the decoding center. The sequence is that of Small ribosomal subunit protein uS7 from Methanopyrus kandleri (strain AV19 / DSM 6324 / JCM 9639 / NBRC 100938).